A 511-amino-acid chain; its full sequence is Histidine ammonia-lyase (511 aa).

Positions 142 to 144 (ASG) form a cross-link, 5-imidazolinone (Ala-Gly). Position 143 is a 2,3-didehydroalanine (Ser) (S143).

It belongs to the PAL/histidase family. Post-translationally, contains an active site 4-methylidene-imidazol-5-one (MIO), which is formed autocatalytically by cyclization and dehydration of residues Ala-Ser-Gly.

It is found in the cytoplasm. The catalysed reaction is L-histidine = trans-urocanate + NH4(+). It functions in the pathway amino-acid degradation; L-histidine degradation into L-glutamate; N-formimidoyl-L-glutamate from L-histidine: step 1/3. In Brucella abortus (strain S19), this protein is Histidine ammonia-lyase.